Reading from the N-terminus, the 314-residue chain is Ribosomal RNA small subunit methyltransferase H (314 aa).

S-adenosyl-L-methionine contacts are provided by residues 35-37 (GGH), Asp-54, Phe-83, Asp-104, and Gln-111.

This sequence belongs to the methyltransferase superfamily. RsmH family.

It localises to the cytoplasm. It catalyses the reaction cytidine(1402) in 16S rRNA + S-adenosyl-L-methionine = N(4)-methylcytidine(1402) in 16S rRNA + S-adenosyl-L-homocysteine + H(+). Its function is as follows. Specifically methylates the N4 position of cytidine in position 1402 (C1402) of 16S rRNA. The sequence is that of Ribosomal RNA small subunit methyltransferase H from Oenococcus oeni (strain ATCC BAA-331 / PSU-1).